The following is a 910-amino-acid chain: MIHAWAIKRALCIFILINCVLKLERSLKVTWKSKRGFHTPVDGANGCEREWKRRGVFFSIRRGSNRKAARLRKAFRGVGTGGRPLFRGGKFIPLFLLRDCQRSGLNENQYKLTGRRCSSRLEVAPRRGNGLPFERRSGGAIGATGQLEDGGPDGGSPPGVQANTSRRSHSSGCSSSGSDGGGAPEHPQQNVRNFCILAHIDSGKSTLADRFLELTKTIKKKKMQDQFLDMMSLEREKGITIKLKAVRMNYQNYIFNLIDTPGHFDFYHEVKRSLSVCEGAILLIDGSKGIQSQTLNIFLELQKHNLKIIPVINKIDLNVCRLDEIETDLLSKFHFMKKDILHISAKYAQGVESLFQRIVSDIPCPAIKSNAFFRAIVFDSFYDQYKGVILIIKVLNGVLTKKTEVFFIQSEKTSIIQEVGYLTPDMKPTESIRQGDIAYVSCNMRKCDDVQISETIVSRDIVKMNAHRKLVVDLDRLGGERTGEAHTNVTRCGVESLRGAAPPVEMHTEREIHLEQMAASKVDVSYPVVFCNIYSVSDKQANELEAALNKLKLNDASFSFKPDVCETLGKGFKCGFNGLLHLNIIQERIKREYGVETIVTAPSVNYLVRVKERGIDKQLRERLVDARFDIAHVNVAAGGSGDGRADGSADGSADGSADGSGDSSAHGSSDRRGAGCARGSDDIIGNNPPEGLYYMTSNVNDIPQKNYVQGIYEPYVRTSIVTPEEYQKHIMAECFQRRGIFIKKENINSHVIFHFDMPLSEILINFLDQIKSCTKGYGSMSYESYITYRESDLHKINIYVNNRSIDSLSFLAHKLNYQEKGKRIVLKLKEMIKPHQFLVVIQAGVGTRIFASERINPIRKNVTAKCYGGDITRRRKLLEKQSAGKKKMFSIGKVKLPPNMFTKLFDLKAQ.

Residues 126–188 form a disordered region; that stretch reads RRGNGLPFER…DGGGAPEHPQ (63 aa). The tr-type G domain occupies 189 to 366; sequence QNVRNFCILA…RIVSDIPCPA (178 aa). GTP-binding positions include 198–205, 259–263, and 313–316; these read AHIDSGKS, DTPGH, and NKID. The segment at 639–683 is disordered; the sequence is GSGDGRADGSADGSADGSADGSGDSSAHGSSDRRGAGCARGSDDI. Over residues 646 to 667 the composition is skewed to low complexity; sequence DGSADGSADGSADGSGDSSAHG.

This sequence belongs to the TRAFAC class translation factor GTPase superfamily. Classic translation factor GTPase family. LepA subfamily.

It is found in the mitochondrion inner membrane. It catalyses the reaction GTP + H2O = GDP + phosphate + H(+). In terms of biological role, promotes mitochondrial protein synthesis. May act as a fidelity factor of the translation reaction, by catalyzing a one-codon backward translocation of tRNAs on improperly translocated ribosomes. Binds to mitochondrial ribosomes in a GTP-dependent manner. This is Translation factor GUF1 homolog, mitochondrial from Plasmodium vivax (strain Salvador I).